The following is a 352-amino-acid chain: Putative F-box protein At5g14160 (352 aa).

The 47-residue stretch at 14–60 folds into the F-box domain; sequence GVDWSELPEDVIRLVLRRLRLSDFHRARAVCSTWCRVWGDCVSKPNQ.

The sequence is that of Putative F-box protein At5g14160 from Arabidopsis thaliana (Mouse-ear cress).